We begin with the raw amino-acid sequence, 277 residues long: MDIIRTIEEMRSWRQKAGRVALVPTMGNLHEGHLALVREAKKQAERVVVSIFVNRLQFGQGEDFDSYPRTFEADRDKLAAAGVDALFLPDERELYPRIRQDFNVEPPHIQDELCGAFRPGHFRGVATVVTKLFNIVQPDAACFGKKDFQQLHIIQAMVADLNQPVKVVPVDIGRAADGLALSSRNGYLSAGEREEAPRLFRELSRIRENLIDGENDYASLEQDARATLEQHGWRVDYVEIRQADTLELAHAGEKRLVVLAAARIGKTRLIDNVEIFR.

26 to 33 (MGNLHEGH) contacts ATP. Histidine 33 acts as the Proton donor in catalysis. (R)-pantoate is bound at residue glutamine 57. Glutamine 57 is a binding site for beta-alanine. 144-147 (GKKD) lines the ATP pocket. Glutamine 150 is a binding site for (R)-pantoate. ATP contacts are provided by residues glycine 173 and 181–184 (LSSR).

This sequence belongs to the pantothenate synthetase family. In terms of assembly, homodimer.

It localises to the cytoplasm. The enzyme catalyses (R)-pantoate + beta-alanine + ATP = (R)-pantothenate + AMP + diphosphate + H(+). The protein operates within cofactor biosynthesis; (R)-pantothenate biosynthesis; (R)-pantothenate from (R)-pantoate and beta-alanine: step 1/1. Its function is as follows. Catalyzes the condensation of pantoate with beta-alanine in an ATP-dependent reaction via a pantoyl-adenylate intermediate. The polypeptide is Pantothenate synthetase (Laribacter hongkongensis (strain HLHK9)).